The primary structure comprises 364 residues: Trans-enoyl reductase ccsC (364 aa).

52 to 55 contacts NADP(+); it reads CDYK. Position 141-148 (141-148) interacts with substrate; it reads TGLATLGM. NADP(+) is bound by residues 176–179, 199–202, Tyr217, and 264–265; these read SSSV, SPRN, and LE. 284–288 contributes to the substrate binding site; sequence GPALL. 353 to 354 contributes to the NADP(+) binding site; sequence VS.

It belongs to the zinc-containing alcohol dehydrogenase family. As to quaternary structure, monomer.

It functions in the pathway mycotoxin biosynthesis. Functionally, trans-enoyl reductase; part of the gene cluster that mediates the biosynthesis of a family of the mycotoxins cytochalasins E and K. The hybrid PKS-NRPS synthetase ccsA and the enoyl reductase ccsC are responsible for fusion of phenylalanine with an octaketide backbone and subsequent release of the stable tetramic acid precursor. The polyketide synthase module (PKS) of the PKS-NRPS ccsA is responsible for the synthesis of the octaketide backbone. The downstream nonribosomal peptide synthetase (NRPS) amidates the carboxyl end of the octaketide with a phenylalanine. A reductase-like domain (R) at the C-terminus catalyzes the reductive release of the polyketide-amino acid intermediate. Because ccsA lacks a designated enoylreductase (ER) domain, the required activity is provided the enoyl reductase ccsC. Upon formation of the 11-membered carbocycle-fused perhydroisoindolone intermediate, a number of oxidative steps are required to afford the final cytochalasin E and K, including two hydroxylations at C17 and C18, one alcohol oxidation at C17, one epoxidation at C6 and C7 and two Baeyer-Villiger oxidations. The oxidative modification at C17, C18 and the C6-C7 epoxidation are likely to be catalyzed by the two cytochrome P450 oxygenases ccsD and ccsG. CcsD may be responsible for the epoxidation of the C6-C7 double bond. CcsG may be responsible for the successive oxidative modifications at C17 and C18. The double Baeyer-Villiger oxidations of ketocytochalasin to precytochalasin and cytochalasin Z(16) are among the final steps leading to cytochalasin E and K and are catalyzed by ccsB. The first oxygen insertion step follows that of the classic BVMO mechanism, generating the ester precytochalasin. Release of precytochalasin into an aqueous environment can generate the shunt product iso-precytochalasin through spontaneous isomerization. Alternatively, precytochalasin can undergo further oxidation by ccsB to yield the in-line carbonate-containing cytochalasin Z(16). Cytochalasin Z(16) is a precursor to cytochalasin E and cytochalasin K, whereas iso-precytochalasin is a precursor to cytochalasin Z(17) and rosellichalasin. The hydrolyase ccsE may catalyze hydrolysis of epoxide bond in cytochalasin E to afford cytochalasin K. The function of ccsF has not been assigned but it may play a role in post-PKS-NRPS biosynthetic step, resistance or transport of cytochalasins and related PKS-NRPS products. The sequence is that of Trans-enoyl reductase ccsC from Aspergillus clavatus (strain ATCC 1007 / CBS 513.65 / DSM 816 / NCTC 3887 / NRRL 1 / QM 1276 / 107).